Consider the following 1663-residue polypeptide: Cortactin-binding protein 2 (1663 aa).

Disordered stretches follow at residues 1–23, 203–222, 367–440, 454–478, and 498–614; these read MATDGASCEPDLSRAPEDAAGAA, KKKTNELEEELSAEKRRSTE, GASV…LHPG, GNANDPDQNGNTTQSPPSRDVSPTS, and RFTS…LPPK. The stretch at 119 to 276 forms a coiled coil; it reads KKMQERMSAQ…EQLKKGSDSK (158 aa). Residues 386–396 show a composition bias toward low complexity; that stretch reads PSTGSTSDPTS. Arg-498 bears the Asymmetric dimethylarginine mark. Over residues 583–593 the composition is skewed to polar residues; the sequence is TVASTPSSLPQ. 6 ANK repeats span residues 709 to 739, 743 to 772, 776 to 805, 809 to 838, 842 to 871, and 912 to 942; these read GRPTLLQQAAAQGNVTLLSMLLNEEGLDINY, DGHSALYSAAKNGHTDCVRLLLSAEAQVNA, NGFTPLCAAAAQGHFECVELLISYDANINH, GGQTPLYLACKNGNKECIKLLLEAGTNRSV, DGWTPVHAAVDTGNVDSLKLLMYHRIPAHG, and EGWTAAHIAASKGFKNCLEILCRHGGLEPER. Positions 1448 to 1483 are disordered; sequence KKGESGAWRKVNTSPRRKSGRFSLPTWNKPDLSTEG. Phosphoserine is present on Ser-1524. The interval 1560–1663 is disordered; it reads DSSGNNPVLS…KNGHLEKPNK (104 aa). Polar residues-rich tracts occupy residues 1561 to 1574 and 1582 to 1599; these read SSGNNPVLSATINN and KEVSPLSSHQTTECSNSK. A compositionally biased stretch (low complexity) spans 1624–1638; that stretch reads SQNTKRSSSSSNTRQ. A compositionally biased stretch (basic and acidic residues) spans 1645–1663; that stretch reads SKEENWNLHKNGHLEKPNK.

In terms of assembly, interacts with CTTN/cortactin SH3 domain. Interacts with STRN, STRN4/zinedin and MOB4/phocein; this interactions mediate the association with the STRIPAK core complex and may regulate dendritic spine distribution of the STRIPAK complex in hippocampal neurons. Activation of glutamate receptors weakens the interaction with STRN and STRN4.

The protein resides in the cytoplasm. It localises to the cell cortex. Its subcellular location is the cell projection. The protein localises to the dendritic spine. In terms of biological role, regulates the dendritic spine distribution of CTTN/cortactin in hippocampal neurons, and thus controls dendritic spinogenesis and dendritic spine maintenance. Associates with the striatin-interacting phosphatase and kinase (STRIPAK) core complex to regulate dendritic spine distribution of the STRIPAK complex in hippocampal neurons. This chain is Cortactin-binding protein 2 (CTTNBP2), found in Gorilla gorilla gorilla (Western lowland gorilla).